A 179-amino-acid chain; its full sequence is Large ribosomal subunit protein uL6 (179 aa).

It belongs to the universal ribosomal protein uL6 family. As to quaternary structure, part of the 50S ribosomal subunit.

Functionally, this protein binds to the 23S rRNA, and is important in its secondary structure. It is located near the subunit interface in the base of the L7/L12 stalk, and near the tRNA binding site of the peptidyltransferase center. This Syntrophomonas wolfei subsp. wolfei (strain DSM 2245B / Goettingen) protein is Large ribosomal subunit protein uL6.